The primary structure comprises 164 residues: Phosphopantetheine adenylyltransferase (164 aa).

Ser9 is a binding site for substrate. Residues Ser9–Phe10 and His17 contribute to the ATP site. Substrate-binding residues include Lys41, Leu73, and Lys87. ATP is bound by residues Gly88–Arg90, Glu98, and Tyr122–Ser128.

Belongs to the bacterial CoaD family. In terms of assembly, homohexamer. Mg(2+) is required as a cofactor.

The protein localises to the cytoplasm. The enzyme catalyses (R)-4'-phosphopantetheine + ATP + H(+) = 3'-dephospho-CoA + diphosphate. It participates in cofactor biosynthesis; coenzyme A biosynthesis; CoA from (R)-pantothenate: step 4/5. In terms of biological role, reversibly transfers an adenylyl group from ATP to 4'-phosphopantetheine, yielding dephospho-CoA (dPCoA) and pyrophosphate. The polypeptide is Phosphopantetheine adenylyltransferase (Rhodococcus jostii (strain RHA1)).